The primary structure comprises 411 residues: Keratin, type I cytoskeletal 12 (411 aa).

A head region spans residues 1 to 42 (DHDYEFPGIQAFAGLGMGFGGSPGGGSLYLPSGNDGGLLSGS). Residues 43 to 78 (EKETMQNLNDRLASYLDKVRALEDANAELENKIREW) are coil 1A. The IF rod domain occupies 43–359 (EKETMQNLND…RLLDGEAQGD (317 aa)). The linker 1 stretch occupies residues 83-101 (GHGHGDCGPQHDYSKYHPL). Positions 102-193 (IEDLRNKIIS…KNHEEELQSC (92 aa)) are coil 1B. Residues 194-216 (RAGGPGEVSVEMDAAPGVDLTRL) form a linker 12 region. The interval 217–354 (LNDMRAQYEA…IETYRRLLDG (138 aa)) is coil 2. A tail region spans residues 355 to 411 (EAQGDGLDESSAMTGSRSQAQSIDSSKDPSKTRKIKTIVQEVVNGEVVSSQVQEIQN). Residues 356 to 387 (AQGDGLDESSAMTGSRSQAQSIDSSKDPSKTR) form a disordered region. Residues 365–378 (SAMTGSRSQAQSID) show a composition bias toward polar residues.

The protein belongs to the intermediate filament family. Heterotetramer of two type I and two type II keratins. Keratin-3 associates with keratin-12. In terms of tissue distribution, cornea specific. Associated mainly with all layers of the central corneal epithelium and also found in the suprabasal limbal epithelium.

Involved in corneal epithelium organization, integrity and corneal keratin expression. The chain is Keratin, type I cytoskeletal 12 (KRT12) from Oryctolagus cuniculus (Rabbit).